Consider the following 273-residue polypeptide: Elongator complex protein 6 (273 aa).

The protein belongs to the ELP6 family. As to quaternary structure, component of the elongator complex which consists of ELP1/IKI3, ELP2, ELP3, ELP4, ELP5/IKI1 and ELP6. The elongator complex is composed of two copies of the Elp123 subcomplex (composed of ELP1/IKI3, ELP2 and ELP3) and two copies of the Elp456 subcomplex (composed of ELP4, ELP5/IKI1 and ELP6). The Elp123 subcomplex forms a two-lobed scaffold, which binds the Elp456 subcomplex asymmetrically. In each lobe, ELP2 is tightly sandwiched between ELP1/IKI3 and ELP3. The Elp123 subcomplex binds tRNA through ELP1/IKI3 and ELP3 and can bind 2 tRNAs simultaneously. tRNA-binding by the Elp123 subcomplex induces conformational rearrangements which precisely position the targeted anticodon base in the active site. The Elp456 subcomplex binds tRNA and has ATPase activity.

It localises to the cytoplasm. Its subcellular location is the nucleus. The protein operates within tRNA modification; 5-methoxycarbonylmethyl-2-thiouridine-tRNA biosynthesis. Its function is as follows. Component of the elongator complex which is required for multiple tRNA modifications, including mcm5U (5-methoxycarbonylmethyl uridine), mcm5s2U (5-methoxycarbonylmethyl-2-thiouridine), and ncm5U (5-carbamoylmethyl uridine). The elongator complex catalyzes formation of carboxymethyluridine in the wobble base at position 34 in tRNAs. It functions as a gamma-toxin target (TOT); disruption of the complex confers resistance to Kluyveromyces lactis toxin zymocin (pGKL1 killer toxin). May also be involved in sensitivity to Pichia inositovora toxin. This is Elongator complex protein 6 (ELP6) from Saccharomyces cerevisiae (strain ATCC 204508 / S288c) (Baker's yeast).